The following is a 586-amino-acid chain: Protein NRT1/ PTR FAMILY 5.3 (586 aa).

Helical transmembrane passes span 77-97 (WVGTSWLTPILGAYVADAHFG), 100-120 (ITFVISSAIYLLGMALLTLSV), 141-161 (ASVIQLAVFFGALYTLAIGTG), 189-209 (FFNWWMFSIFFGTFFATTVLV), 217-237 (WAIGYGLSTLGLAFSIFIFLL), 334-354 (PVLFVTFVPSMMLAQIMTLFI), 370-390 (IPPASLLGFTTFSMLVSIVIY), 408-428 (ITLLQRMGIGMILHILIMIIA), 449-469 (AVPIPLSIFTLLPQYVLMGLA), 492-512 (LGTSYTSTSMAVGYFMSSILL), and 538-558 (NYYMFFAVLNLLNFILFLVVI).

The protein belongs to the major facilitator superfamily. Proton-dependent oligopeptide transporter (POT/PTR) (TC 2.A.17) family. Expressed in roots and siliques.

It is found in the membrane. Its function is as follows. Peptide transporter. The protein is Protein NRT1/ PTR FAMILY 5.3 (NPF5.3) of Arabidopsis thaliana (Mouse-ear cress).